Consider the following 185-residue polypeptide: Pro-adrenomedullin (185 aa).

Residues 1–21 (MKLVSVALMYLGSLAFLGADT) form the signal peptide. Residue R41 is modified to Arginine amide. A propeptide spanning residues 45–92 (ELRMSSSYPTGLADVKAGPAQTLIRPQDMKGASRSPEDSSPDAARIRV) is cleaved from the precursor. A disordered region spans residues 60-87 (KAGPAQTLIRPQDMKGASRSPEDSSPDA). The cysteines at positions 110 and 115 are disulfide-linked. The disordered stretch occupies residues 133 to 185 (DNVAPRSKISPQGYGRRRRRSLPEAGPGRTLVSSKPQAHGAPAPPSGSAPHFL). The residue at position 146 (Y146) is a Tyrosine amide. A propeptide spans 148-185 (RRRRRSLPEAGPGRTLVSSKPQAHGAPAPPSGSAPHFL) (preproAM C-terminal fragment).

This sequence belongs to the adrenomedullin family. As to expression, highest levels found in pheochromocytoma and adrenal medulla. Also found in lung, ventricle and kidney tissues.

Its subcellular location is the secreted. Functionally, adrenomedullin/ADM and proadrenomedullin N-20 terminal peptide/PAMP are peptide hormones that act as potent hypotensive and vasodilatator agents. Numerous actions have been reported most related to the physiologic control of fluid and electrolyte homeostasis. In the kidney, ADM is diuretic and natriuretic, and both ADM and PAMP inhibit aldosterone secretion by direct adrenal actions. In pituitary gland, both peptides at physiologically relevant doses inhibit basal ACTH secretion. Both peptides appear to act in brain and pituitary gland to facilitate the loss of plasma volume, actions which complement their hypotensive effects in blood vessels. Its function is as follows. ADM function is mediated by the CALCRL-RAMP2 and CALCRL-RAMP3 receptor complexes with ADM showing the highest potency for the CALCRL-RAMP2 complex. This is Pro-adrenomedullin from Homo sapiens (Human).